Reading from the N-terminus, the 751-residue chain is Serine/threonine-protein kinase B-raf (751 aa).

The span at 1–32 (MAALSGGGGSSSGGGGGGGGGGGGGDGGGGAE) shows a compositional bias: gly residues. Residues 1 to 55 (MAALSGGGGSSSGGGGGGGGGGGGGDGGGGAEQGQALFNGDMEPEAGAGAAASSA) form a disordered region. N-acetylalanine is present on alanine 2. The span at 46 to 55 (AGAGAAASSA) shows a compositional bias: low complexity. The residue at position 135 (serine 135) is a Phosphoserine. Positions 139–211 (PIVRVFLPNK…TGEELHVEVL (73 aa)) constitute an RBD domain. The Zn(2+) site is built by histidine 219, cysteine 232, cysteine 235, cysteine 245, cysteine 248, histidine 253, cysteine 256, and cysteine 264. Positions 288 to 440 (EASFPETALP…SSDDWEIPDG (153 aa)) are disordered. Low complexity predominate over residues 297–324 (PSGSSSAPPSDSTGPQILTSPSPSKSIP). Position 316 is a phosphoserine (serine 316). The segment covering 331–346 (PADEDHRNQFGQRDRS) has biased composition (basic and acidic residues). Serine 348 bears the Phosphoserine mark. Threonine 356 carries the phosphothreonine; by autocatalysis modification. A Phosphothreonine modification is found at threonine 379. Serine 382 is modified (phosphoserine). Threonine 384 carries the phosphothreonine modification. Residues 406-432 (QRERKSSSSSSSEDRSRMKTLGRRDSS) are compositionally biased toward basic and acidic residues. Phosphoserine occurs at positions 431 and 432. Residues 442–702 (ITVGQRIGSG…PQILASIELL (261 aa)) enclose the Protein kinase domain. ATP contacts are provided by residues 448-456 (IGSGSFGTV) and lysine 468. The Proton acceptor role is filled by aspartate 561. Residue lysine 563 forms a Glycyl lysine isopeptide (Lys-Gly) (interchain with G-Cter in ubiquitin) linkage. The residue at position 656 (arginine 656) is an Omega-N-methylarginine; by PRMT5. Serine 714 and serine 735 each carry phosphoserine. Phosphothreonine; by MAPK1 is present on threonine 738.

The protein belongs to the protein kinase superfamily. TKL Ser/Thr protein kinase family. RAF subfamily. As to quaternary structure, monomer. Homodimer. Heterodimerizes with RAF1, and the heterodimer possesses a highly increased kinase activity compared to the respective homodimers or monomers. Heterodimerization is mitogen-regulated and enhanced by 14-3-3 proteins. MAPK1/ERK2 activation can induce a negative feedback that promotes the dissociation of the heterodimer by phosphorylating BRAF at Thr-738. Heterodimerizes (via N-terminus) with KSR1 (via N-terminus) or KSR2 (via N-terminus) in a MAP2K1-dependent manner. Interacts with MAP2K1 and MAP2K2. Found in a complex with at least BRAF, HRAS, MAP2K1, MAPK3 and RGS14. Interacts with RIT1. Interacts (via N-terminus) with RGS14 (via RBD domains); the interaction mediates the formation of a ternary complex with RAF1, a ternary complex inhibited by GNAI1. Interacts with DGKH. Interacts with PRMT5. Interacts with AKAP13, MAP2K1 and KSR1. Identified in a complex with AKAP13, KSR1 and MAP2K1. Interacts with FNIP1 and FNIP2. Zn(2+) serves as cofactor. Phosphorylation at Ser-348 by SGK1 inhibits its activity. Dephosphorylation of Ser-348 by the SHOC2-MRAS-PP1c (SMP) complex consisting of SHOC2, GTP-bound M-Ras/MRAS and the catalytic subunit of protein phosphatase 1 (PPP1CA, PPP1CB or PPP1CC); this relieves inactivation and stimulates kinase activity. In terms of processing, methylation by PRMT5 decreases stability and kinase activity. Post-translationally, ubiquitinated by RNF149; which leads to proteasomal degradation. Polyubiquitinated at Lys-615 in response to EGF.

It is found in the nucleus. The protein resides in the cytoplasm. It localises to the cell membrane. The catalysed reaction is L-seryl-[protein] + ATP = O-phospho-L-seryl-[protein] + ADP + H(+). It carries out the reaction L-threonyl-[protein] + ATP = O-phospho-L-threonyl-[protein] + ADP + H(+). In quiescent cells, maintained in an inactive state via an intramolecular interaction between the protein kinase and N-terminal domains. Following mitogen-mediated cell activation, binds via its RGB domain to active HRAS (GTP-bound) which releases the inhibitory intramolecular interaction between the two domains. This allows the MAP2K1-mediated dimerization of KSR1 or KSR2, and BRAF which activates BRAF. In terms of biological role, involved in the transduction of mitogenic signals from the cell membrane to the nucleus. Phosphorylates MAP2K1, and thereby activates the MAP kinase signal transduction pathway. Phosphorylates PFKFB2. May play a role in the postsynaptic responses of hippocampal neurons. The chain is Serine/threonine-protein kinase B-raf from Mus musculus (Mouse).